Consider the following 900-residue polypeptide: Translation initiation factor IF-2 (900 aa).

3 stretches are compositionally biased toward basic and acidic residues: residues 119–158 (AAKA…EKQE), 165–191 (ADEK…KADA), and 198–229 (EEAR…DHHV). The tract at residues 119 to 306 (AAKAEAEAKA…NARSVAPESM (188 aa)) is disordered. The span at 257–272 (SANAGNNANSNSNAGS) shows a compositional bias: low complexity. The tr-type G domain occupies 400 to 569 (PRAPVVTIMG…LLESEVLELK (170 aa)). A G1 region spans residues 409 to 416 (GHVDHGKT). 409–416 (GHVDHGKT) lines the GTP pocket. The interval 434–438 (GITQH) is G2. Residues 455-458 (DTPG) are G3. Residues 455-459 (DTPGH) and 509-512 (NKID) each bind GTP. A G4 region spans residues 509–512 (NKID). Residues 545–547 (SAK) are G5.

It belongs to the TRAFAC class translation factor GTPase superfamily. Classic translation factor GTPase family. IF-2 subfamily.

The protein resides in the cytoplasm. In terms of biological role, one of the essential components for the initiation of protein synthesis. Protects formylmethionyl-tRNA from spontaneous hydrolysis and promotes its binding to the 30S ribosomal subunits. Also involved in the hydrolysis of GTP during the formation of the 70S ribosomal complex. This chain is Translation initiation factor IF-2, found in Shewanella piezotolerans (strain WP3 / JCM 13877).